Here is a 248-residue protein sequence, read N- to C-terminus: Probable transcriptional regulatory protein SO_2432 (248 aa).

This sequence belongs to the TACO1 family.

The protein resides in the cytoplasm. The protein is Probable transcriptional regulatory protein SO_2432 of Shewanella oneidensis (strain ATCC 700550 / JCM 31522 / CIP 106686 / LMG 19005 / NCIMB 14063 / MR-1).